The chain runs to 277 residues: MKFGKRLKKQVEESLPEWRDKFLAYKRLKKLVRLVSSSSGDVGGGGGGEAEFVRLLDGEVDRINAFFLEQEEEFVIRQRELQETVEKVAGGGGGGRRPAAAEMRRVRKEIVDLHGEMVLLLNYSAVNYTGLAKILKKYDKRTGRLLRLPFIEKVLRQPFFTTELISRLVRDCEATMEAIFTSSVATTAMAGDRRTWKGCSGDAGMAPMADQQGIFRNTVAALATMKELRSGSSTYGRFSLPPMAAPASPESDVLQSIRSDPHLKENGRIPSLQFFYA.

The region spanning 1–152 is the SPX domain; the sequence is MKFGKRLKKQ…GRLLRLPFIE (152 aa).

This chain is SPX domain-containing protein 3 (SPX3), found in Oryza sativa subsp. indica (Rice).